A 662-amino-acid polypeptide reads, in one-letter code: U6 snRNA-specific terminal uridylyltransferase (662 aa).

Residues aspartate 183 and aspartate 185 each coordinate Mg(2+). Residues 384–437 form the PAP-associated domain; that stretch reads CKFFRELFKYYANFDFTNKAIYGKKAMQKKTLSSAHGGVEESPLMLMDPMDITH.

Belongs to the DNA polymerase type-B-like family. In terms of assembly, forms a complex composed of sart-3, terminal uridylyltransferase usip-1 and U6 snRNA; complex formation is mediated by usip-1 and sart-3 binding to U6 snRNA. The cofactor is Mg(2+). Requires Mn(2+) as cofactor. In terms of tissue distribution, ubiquitously expressed.

The protein resides in the nucleus. The protein localises to the nucleoplasm. It carries out the reaction RNA(n) + UTP = RNA(n)-3'-uridine ribonucleotide + diphosphate. Its function is as follows. Acts as a specific terminal uridylyltransferase for U6 snRNA. Responsible for the addition of UTP at the 3' end of U6 snRNA which stabilizes U6 snRNA. Does not have activity towards modified uridine containing 3'-monophosphorylation or 2'-O-methylation. The sequence is that of U6 snRNA-specific terminal uridylyltransferase from Caenorhabditis elegans.